Consider the following 262-residue polypeptide: T-cell surface glycoprotein YE1/48 (262 aa).

Topologically, residues 1 to 44 (MSEQEVTYSMVRFHKSAGLQKQVRPEETKGPREAGYRRCSFHWK) are cytoplasmic. A helical; Signal-anchor for type II membrane protein membrane pass occupies residues 45-66 (FIVIALGIFCFLLLVAVSVLAI). The Extracellular segment spans residues 67-262 (KIFQYDQQKN…CGKRLDKFPH (196 aa)). N-linked (GlcNAc...) asparagine glycosylation is found at N86, N103, and N123. Residues 137-139 (RGD) carry the Cell attachment site motif. Residues 138–257 (GDKVYWFCYG…VFICICGKRL (120 aa)) form the C-type lectin domain. 4 disulfide bridges follow: C145-C150, C163-C251, C167-C253, and C232-C245.

As to quaternary structure, homodimer; disulfide-linked. In terms of tissue distribution, high, in T-lymphoma lines, very low in normal lymphocytes.

Its subcellular location is the membrane. Receptor on natural killer (NK) cells for H-2d alleles. Inhibits the activity of NK cells thus preventing cell lysis. The sequence is that of T-cell surface glycoprotein YE1/48 (Klra1) from Mus musculus (Mouse).